The chain runs to 431 residues: Enolase (431 aa).

Gln-167 lines the (2R)-2-phosphoglycerate pocket. Glu-209 (proton donor) is an active-site residue. Residues Asp-246, Glu-289, and Asp-316 each coordinate Mg(2+). (2R)-2-phosphoglycerate-binding residues include Lys-341, Arg-370, Ser-371, and Lys-392. The active-site Proton acceptor is Lys-341.

It belongs to the enolase family. In terms of assembly, component of the RNA degradosome, a multiprotein complex involved in RNA processing and mRNA degradation. Mg(2+) serves as cofactor.

Its subcellular location is the cytoplasm. The protein localises to the secreted. It localises to the cell surface. It catalyses the reaction (2R)-2-phosphoglycerate = phosphoenolpyruvate + H2O. Its pathway is carbohydrate degradation; glycolysis; pyruvate from D-glyceraldehyde 3-phosphate: step 4/5. Functionally, catalyzes the reversible conversion of 2-phosphoglycerate (2-PG) into phosphoenolpyruvate (PEP). It is essential for the degradation of carbohydrates via glycolysis. The chain is Enolase from Shewanella denitrificans (strain OS217 / ATCC BAA-1090 / DSM 15013).